The sequence spans 45 residues: Metallothionein-like protein 1A (45 aa).

This sequence belongs to the metallothionein superfamily. Type 15 family. Expressed in phloem and mesophyll cells of leaves, vascular tissues of cotyledons, sepals and petals. Expressed in anthers. Expressed in root endodermis and at lower levels in cortex of mature region of roots.

Functionally, metallothioneins have a high content of cysteine residues that bind various heavy metals. Functions as a metal chelator of copper (Cu) and zinc (Zn). Plays a role in Cu homeostasis in the roots under elevated Cu concentration. Functions cooperatively with the phytochelatin synthase PCS1 to protect plants from Cu and cadmium (Cd) toxicity. Plays a role in Cu homeostasis, specifically in the remobilization of Cu from senescing leaves. The mobilization of Cu from internal sources is important for seed development. Confers tolerance to Cd and plays a role in Cd and Zn homeostasis. In Arabidopsis thaliana (Mouse-ear cress), this protein is Metallothionein-like protein 1A (MT1A).